A 252-amino-acid chain; its full sequence is Streptothricin hydrolase (252 aa).

The active-site Nucleophile is cysteine 158. Over residues 230–242 the composition is skewed to low complexity; the sequence is AVGPAAAPGLPVS. The interval 230-252 is disordered; that stretch reads AVGPAAAPGLPVSPAAPPPSPVR. The segment covering 243 to 252 has biased composition (pro residues); that stretch reads PAAPPPSPVR.

Belongs to the isochorismatase family.

It carries out the reaction streptothricin F + H2O = streptothricin F acid. In terms of biological role, catalyzes the hydrolysis of the amide bond of streptolidine lactam, thereby conferring streptothricin (ST) resistance. Can hydrolyze streptothricin-F and streptothricin-D. However, this strain is believed to be a ST nonproducer, which raises the possibility that its true role may not be its involvement in self-resistance to STs. May catalyze the hydrolysis of naturally occurring cyclic amide compounds that are structurally related to STs. This is Streptothricin hydrolase (sttH) from Streptomyces noursei (Streptomyces albulus).